The primary structure comprises 123 residues: Small ribosomal subunit protein uS12 (123 aa).

Asp-89 carries the 3-methylthioaspartic acid modification.

Belongs to the universal ribosomal protein uS12 family. In terms of assembly, part of the 30S ribosomal subunit. Contacts proteins S8 and S17. May interact with IF1 in the 30S initiation complex.

Functionally, with S4 and S5 plays an important role in translational accuracy. Its function is as follows. Interacts with and stabilizes bases of the 16S rRNA that are involved in tRNA selection in the A site and with the mRNA backbone. Located at the interface of the 30S and 50S subunits, it traverses the body of the 30S subunit contacting proteins on the other side and probably holding the rRNA structure together. The combined cluster of proteins S8, S12 and S17 appears to hold together the shoulder and platform of the 30S subunit. The chain is Small ribosomal subunit protein uS12 from Rhizobium leguminosarum bv. trifolii (strain WSM2304).